Consider the following 142-residue polypeptide: Large ribosomal subunit protein uL13 (142 aa).

Belongs to the universal ribosomal protein uL13 family. In terms of assembly, part of the 50S ribosomal subunit.

Its function is as follows. This protein is one of the early assembly proteins of the 50S ribosomal subunit, although it is not seen to bind rRNA by itself. It is important during the early stages of 50S assembly. The protein is Large ribosomal subunit protein uL13 of Bordetella petrii (strain ATCC BAA-461 / DSM 12804 / CCUG 43448).